The following is a 169-amino-acid chain: Alpha-S2-casein-like B (169 aa).

The signal sequence occupies residues 1 to 15 (MKFIILTCLLAVALA).

It belongs to the alpha-casein family. Mammary gland specific. Secreted in milk.

It is found in the secreted. Important role in the capacity of milk to transport calcium phosphate. The sequence is that of Alpha-S2-casein-like B (Csn1s2b) from Rattus norvegicus (Rat).